The primary structure comprises 193 residues: Xanthine phosphoribosyltransferase (193 aa).

Xanthine-binding residues include Leu20 and Asn27. 128-132 (ANGEA) is a binding site for 5-phospho-alpha-D-ribose 1-diphosphate. Xanthine is bound at residue Lys156.

It belongs to the purine/pyrimidine phosphoribosyltransferase family. Xpt subfamily. In terms of assembly, homodimer.

Its subcellular location is the cytoplasm. It catalyses the reaction XMP + diphosphate = xanthine + 5-phospho-alpha-D-ribose 1-diphosphate. The protein operates within purine metabolism; XMP biosynthesis via salvage pathway; XMP from xanthine: step 1/1. Functionally, converts the preformed base xanthine, a product of nucleic acid breakdown, to xanthosine 5'-monophosphate (XMP), so it can be reused for RNA or DNA synthesis. This chain is Xanthine phosphoribosyltransferase, found in Exiguobacterium sp. (strain ATCC BAA-1283 / AT1b).